Consider the following 323-residue polypeptide: UDP-galactose/UDP-glucose transporter 7 (323 aa).

The Cytoplasmic portion of the chain corresponds to 1–10; it reads MEVQAEMEPT. Residues 11 to 31 traverse the membrane as a helical segment; it reads SSISLVAAVSYGIASMAMVFI. Residues 32-35 lie on the Lumenal side of the membrane; sequence NKAV. Residues 36–58 traverse the membrane as a helical segment; sequence IMQYPHSMTVLTLQQLATSLLIH. Topologically, residues 59–78 are cytoplasmic; the sequence is FGRRMGYTRAKGIDMATAKK. Residues 79–97 traverse the membrane as a helical segment; it reads LLPVSIFYNANVAFALASL. The Lumenal portion of the chain corresponds to 98–101; that stretch reads KGVN. A helical transmembrane segment spans residues 102–124; the sequence is IPMYIAIKRLTPLAVLISGVLFG. Topologically, residues 125–132 are cytoplasmic; the sequence is KGKPTTQV. Residues 133–153 form a helical membrane-spanning segment; it reads ALSVLLTAAGCVIAALGDFSF. Residue aspartate 154 is a topological domain, lumenal. Residues 155–175 form a helical membrane-spanning segment; the sequence is LFGYGLALTSVFFQTMYLVLV. At 176–186 the chain is on the cytoplasmic side; that stretch reads EKSGAEDGLSS. The helical transmembrane segment at 187 to 207 threads the bilayer; that stretch reads IEIMFYNSFLSLPFLSILIIV. The Lumenal segment spans residues 208-226; it reads TGEFPNSLSLLLAKCSYLP. Residues 227-247 traverse the membrane as a helical segment; the sequence is FLVILILSLVMGIVLNFTMFL. The Cytoplasmic segment spans residues 248–252; the sequence is CTIVN. A helical transmembrane segment spans residues 253–275; that stretch reads SALTTTIVGVLKGVGSTTLGFVL. Residues 276 to 278 lie on the Lumenal side of the membrane; that stretch reads LGG. Residues 279 to 301 form a helical membrane-spanning segment; that stretch reads VEVHALNVSGLVVNTAGGVWYSY. At 302 to 323 the chain is on the cytoplasmic side; it reads AKYRQKKAKPAKLMSDLEAHKK.

This sequence belongs to the TPT transporter family. UGnT (TC 2.A.7.15) subfamily. In terms of tissue distribution, widely expressed with highest expression in roots.

It localises to the golgi apparatus membrane. In terms of biological role, nucleotide-sugar transporter that transports UDP-glucose and UDP-galactose. Plays a role in lateral root and root hair development. The protein is UDP-galactose/UDP-glucose transporter 7 of Arabidopsis thaliana (Mouse-ear cress).